We begin with the raw amino-acid sequence, 108 residues long: Urease subunit beta (108 aa).

The protein belongs to the urease beta subunit family. As to quaternary structure, heterotrimer of UreA (gamma), UreB (beta) and UreC (alpha) subunits. Three heterotrimers associate to form the active enzyme.

The protein localises to the cytoplasm. It catalyses the reaction urea + 2 H2O + H(+) = hydrogencarbonate + 2 NH4(+). Its pathway is nitrogen metabolism; urea degradation; CO(2) and NH(3) from urea (urease route): step 1/1. The sequence is that of Urease subunit beta from Microcystis aeruginosa (strain NIES-843 / IAM M-2473).